Here is a 194-residue protein sequence, read N- to C-terminus: Type II restriction enzyme OkrAI (194 aa).

Mg(2+) contacts are provided by Glu71, Asp86, and Trp100. The active-site Proton acceptor is the Glu101.

Homodimer. Requires Mg(2+) as cofactor.

It catalyses the reaction Endonucleolytic cleavage of DNA to give specific double-stranded fragments with terminal 5'-phosphates.. A P subtype restriction enzyme that recognizes the double-stranded sequence 5'-GGATCC-3' and cleaves after G-1. The polypeptide is Type II restriction enzyme OkrAI (Oceanobacter kriegii (Oceanospirillum kriegii)).